The primary structure comprises 1283 residues: Oxysterol-binding protein homolog 2 (1283 aa).

Ser-2 bears the N-acetylserine mark. Ser-7 is subject to Phosphoserine. ANK repeat units lie at residues 106–134 and 206–235; these read NGNT…SIND and TGTT…EATV. Positions 289–386 constitute a PH domain; that stretch reads PPTYKGFLKK…WVNAIQSAIR (98 aa). A phosphoserine mark is found at Ser-422, Ser-445, Ser-451, Ser-455, Ser-458, Ser-459, and Ser-486. Position 488 is a phosphothreonine (Thr-488). Composition is skewed to polar residues over residues 504-518 and 530-551; these read SNTL…SGSG and ANLS…NNYI. Disordered regions lie at residues 504–571 and 702–721; these read SNTL…LGIN and TAGN…DTTA. Ser-512 and Ser-515 each carry phosphoserine. Positions 554-568 are enriched in acidic residues; it reads FEGDEANSDDEEEDL. The segment covering 707 to 716 has biased composition (basic and acidic residues); that stretch reads ESLENDKEQE. Ser-717 is subject to Phosphoserine. The FFAT signature appears at 745–751; it reads EFYDAAE. Positions 767–834 are disordered; sequence STAAAPKHAP…SLKNFKAEDK (68 aa). A Phosphothreonine modification is found at Thr-783. Ser-787 bears the Phosphoserine mark. Basic and acidic residues-rich tracts occupy residues 791–810 and 818–834; these read QDEK…KFEK and DEPK…AEDK. Ser-825 and Ser-1151 each carry phosphoserine. The segment at 897 to 1268 is OSBP-related domain (ORD); sequence SLWAVLKSMV…KYWRYTGKYW (372 aa).

It belongs to the OSBP family. In terms of assembly, interacts with SCS2.

The protein resides in the cell membrane. Its subcellular location is the endoplasmic reticulum membrane. Functionally, lipid transport protein (LTP) involved in non-vesicular transfer of lipids between membranes. Functions in phosphoinositide-coupled directional transport of various lipids by carrying the lipid molecule in a hydrophobic pocket and transferring it between membranes through the cytosol. Involved in maintenance of intracellular sterol distribution and homeostasis. Binds and transports sterol. Plays a role in the positive regulation of vesicular transport of ceramide from the ER to the Golgi, negatively regulating COPII-mediated ER export of cargos. The protein is Oxysterol-binding protein homolog 2 of Saccharomyces cerevisiae (strain ATCC 204508 / S288c) (Baker's yeast).